The chain runs to 213 residues: Ribonuclease HII (213 aa).

In terms of domain architecture, RNase H type-2 spans 25 to 213; it reads KTLCGVDEAG…FKPVKQLLPH (189 aa). A divalent metal cation-binding residues include Asp-31, Glu-32, and Asp-124.

This sequence belongs to the RNase HII family. Mn(2+) is required as a cofactor. It depends on Mg(2+) as a cofactor.

It localises to the cytoplasm. The catalysed reaction is Endonucleolytic cleavage to 5'-phosphomonoester.. In terms of biological role, endonuclease that specifically degrades the RNA of RNA-DNA hybrids. The chain is Ribonuclease HII from Magnetococcus marinus (strain ATCC BAA-1437 / JCM 17883 / MC-1).